Reading from the N-terminus, the 462-residue chain is Lysyl endopeptidase (462 aa).

Positions 1-24 (MHKRTYLNACLVLALAAGASQALA) are cleaved as a signal peptide. Residues 25–211 (APGASEMAGD…VSYFADSLYK (187 aa)) constitute a propeptide that is removed on maturation. 3 disulfides stabilise this stretch: cysteine 224-cysteine 435, cysteine 230-cysteine 305, and cysteine 262-cysteine 284. Residues histidine 283, aspartate 333, and serine 409 each act as charge relay system in the active site.

It belongs to the peptidase S1 family. Experiments performed in E.coli. Processing of pro-endopeptidase to mature endopeptidase is probably autocatalytic, as mutations in the probable active site residues prevent processing, and purified inactive pro-endopeptidase disappears in the presence of active endopeptidase.

The protein resides in the secreted. The enzyme catalyses Preferential cleavage: Lys-|-Xaa, including Lys-|-Pro.. Lysine-specific endoprotease. Involved in corneal virulence. This Pseudomonas aeruginosa (strain ATCC 15692 / DSM 22644 / CIP 104116 / JCM 14847 / LMG 12228 / 1C / PRS 101 / PAO1) protein is Lysyl endopeptidase (prpL).